Consider the following 131-residue polypeptide: SPbeta prophage-derived uncharacterized protein YosD (131 aa).

A disordered region spans residues 102–131 (EHNNKKAKNNDTQNQRQIKTSWWQRLTKKD). Positions 111–125 (NDTQNQRQIKTSWWQ) are enriched in polar residues.

This is SPbeta prophage-derived uncharacterized protein YosD (yosD) from Bacillus subtilis (strain 168).